Reading from the N-terminus, the 962-residue chain is Glycine dehydrogenase (decarboxylating) (962 aa).

The residue at position 709 (K709) is an N6-(pyridoxal phosphate)lysine.

This sequence belongs to the GcvP family. In terms of assembly, the glycine cleavage system is composed of four proteins: P, T, L and H. It depends on pyridoxal 5'-phosphate as a cofactor.

It carries out the reaction N(6)-[(R)-lipoyl]-L-lysyl-[glycine-cleavage complex H protein] + glycine + H(+) = N(6)-[(R)-S(8)-aminomethyldihydrolipoyl]-L-lysyl-[glycine-cleavage complex H protein] + CO2. The glycine cleavage system catalyzes the degradation of glycine. The P protein binds the alpha-amino group of glycine through its pyridoxal phosphate cofactor; CO(2) is released and the remaining methylamine moiety is then transferred to the lipoamide cofactor of the H protein. In Shewanella sp. (strain ANA-3), this protein is Glycine dehydrogenase (decarboxylating).